A 244-amino-acid chain; its full sequence is Ribosome maturation factor RimM (244 aa).

The segment at 1–58 (MSERDSGSSGPVKAKAAAPRAKTSGQAPFGAFVRKPVEKTEGKAKANAANAGSGATEM) is disordered. Residues 13–22 (KAKAAAPRAK) show a composition bias toward low complexity. The span at 35-44 (KPVEKTEGKA) shows a compositional bias: basic and acidic residues. The segment covering 45 to 57 (KANAANAGSGATE) has biased composition (low complexity). The region spanning 163–244 (ADEFYWVDLL…QITVDWEADY (82 aa)) is the PRC barrel domain.

The protein belongs to the RimM family. In terms of assembly, binds ribosomal protein uS19.

The protein localises to the cytoplasm. In terms of biological role, an accessory protein needed during the final step in the assembly of 30S ribosomal subunit, possibly for assembly of the head region. Essential for efficient processing of 16S rRNA. May be needed both before and after RbfA during the maturation of 16S rRNA. It has affinity for free ribosomal 30S subunits but not for 70S ribosomes. This chain is Ribosome maturation factor RimM, found in Paraburkholderia xenovorans (strain LB400).